The primary structure comprises 108 residues: Replication initiation control protein YabA (108 aa).

4 residues coordinate Zn(2+): His82, Cys84, Cys98, and Cys101.

It belongs to the YabA family. Homotetramer. Interacts with both DnaA and DnaN, acting as a bridge between these two proteins. Zn(2+) serves as cofactor.

The protein resides in the cytoplasm. The protein localises to the nucleoid. Its function is as follows. Involved in control of chromosome replication initiation. Inhibits the cooperative binding of DnaA to the oriC region, thus negatively regulating initiation of chromosome replication. Inhibits the ability of DnaA-ATP to form a helix on DNA; does not disassemble preformed DnaA-DNA helices. Decreases the residence time of DnaA on the chromosome at its binding sites (oriC, replication forks and promoter-binding sites). Tethers DnaA to the replication machinery via the DNA polymerase beta sliding clamp subunit (dnaN). Associates with oriC and other DnaA targets on the chromosome in a DnaA-dependent manner. This is Replication initiation control protein YabA from Streptococcus agalactiae serotype Ia (strain ATCC 27591 / A909 / CDC SS700).